We begin with the raw amino-acid sequence, 248 residues long: Small ribosomal subunit protein uS2 (248 aa).

This sequence belongs to the universal ribosomal protein uS2 family.

This is Small ribosomal subunit protein uS2 from Cupriavidus necator (strain ATCC 17699 / DSM 428 / KCTC 22496 / NCIMB 10442 / H16 / Stanier 337) (Ralstonia eutropha).